The following is a 129-amino-acid chain: Small ribosomal subunit protein uS11 (129 aa).

A disordered region spans residues 108–129; sequence TPIPHNGTRPPKRVLKRLRLKK. A compositionally biased stretch (basic residues) spans 117–129; sequence PPKRVLKRLRLKK.

Belongs to the universal ribosomal protein uS11 family. Part of the 30S ribosomal subunit. Interacts with proteins S7 and S18. Binds to IF-3.

Located on the platform of the 30S subunit, it bridges several disparate RNA helices of the 16S rRNA. Forms part of the Shine-Dalgarno cleft in the 70S ribosome. The sequence is that of Small ribosomal subunit protein uS11 from Mycoplasmopsis synoviae (strain 53) (Mycoplasma synoviae).